Consider the following 514-residue polypeptide: Probable cytosol aminopeptidase (514 aa).

Residues Lys-266 and Asp-271 each coordinate Mn(2+). The active site involves Lys-278. Mn(2+)-binding residues include Asp-289, Asp-357, and Glu-359. The active site involves Arg-361.

Belongs to the peptidase M17 family. It depends on Mn(2+) as a cofactor.

The protein localises to the cytoplasm. It carries out the reaction Release of an N-terminal amino acid, Xaa-|-Yaa-, in which Xaa is preferably Leu, but may be other amino acids including Pro although not Arg or Lys, and Yaa may be Pro. Amino acid amides and methyl esters are also readily hydrolyzed, but rates on arylamides are exceedingly low.. The enzyme catalyses Release of an N-terminal amino acid, preferentially leucine, but not glutamic or aspartic acids.. In terms of biological role, presumably involved in the processing and regular turnover of intracellular proteins. Catalyzes the removal of unsubstituted N-terminal amino acids from various peptides. The protein is Probable cytosol aminopeptidase of Oleidesulfovibrio alaskensis (strain ATCC BAA-1058 / DSM 17464 / G20) (Desulfovibrio alaskensis).